A 216-amino-acid chain; its full sequence is Flagellin B3 (216 aa).

The propeptide occupies 1-11 (MLLDYIKSRRG).

Belongs to the archaeal flagellin family.

It localises to the archaeal flagellum. Its function is as follows. Flagellin is the subunit protein which polymerizes to form the filaments of archaeal flagella. The sequence is that of Flagellin B3 (flaB3) from Methanocaldococcus jannaschii (strain ATCC 43067 / DSM 2661 / JAL-1 / JCM 10045 / NBRC 100440) (Methanococcus jannaschii).